We begin with the raw amino-acid sequence, 92 residues long: DNA-directed RNA polymerase subunit Rpo11 (92 aa).

This sequence belongs to the archaeal Rpo11/eukaryotic RPB11/RPC19 RNA polymerase subunit family. In terms of assembly, part of the RNA polymerase complex.

The protein resides in the cytoplasm. It catalyses the reaction RNA(n) + a ribonucleoside 5'-triphosphate = RNA(n+1) + diphosphate. DNA-dependent RNA polymerase (RNAP) catalyzes the transcription of DNA into RNA using the four ribonucleoside triphosphates as substrates. This is DNA-directed RNA polymerase subunit Rpo11 from Methanosarcina acetivorans (strain ATCC 35395 / DSM 2834 / JCM 12185 / C2A).